The following is a 334-amino-acid chain: MASVMQKLITPLASGPAEPPRNKVTIVGVGQVGMACAVSVLLRELADELALVDVVEDRLKGEMLDLQHGSLFLKTPKIVADKDYSVTANSRIVVVTAGVRQQEGESRLNLVQRNVNIFKHIIPQIVKYSPDCILVVVSNPVDVLTYVTWKLSGLPKHRVIGSGTNLDSARFRYIMAEKLGIHASSFNGYILGEHGDTSVPVWSGANVAGVSLQKLNPDIGTDKDAENWKEAHKMVVDSAYEVIKLKGYTNWAIGLSVADLTETLVKNLNRVHPVSTMVKGMYGINEEVYLSLPCVLNSSGVGSVINMTLTDGEIGQLKSSADTLWGIQKDLKDL.

NAD(+) contacts are provided by residues 30 to 58 (GQVG…VEDR) and Arg100. Arg107, Asn139, and Arg170 together coordinate substrate. Residue Asn139 participates in NAD(+) binding. Residue His194 is the Proton acceptor of the active site. Thr249 is a substrate binding site.

The protein belongs to the LDH/MDH superfamily. LDH family. As to quaternary structure, homotetramer.

The protein resides in the cytoplasm. It carries out the reaction (S)-lactate + NAD(+) = pyruvate + NADH + H(+). It participates in fermentation; pyruvate fermentation to lactate; (S)-lactate from pyruvate: step 1/1. In Danio rerio (Zebrafish), this protein is L-lactate dehydrogenase B-A chain (ldhba).